Consider the following 173-residue polypeptide: Placenta-specific protein 1 (173 aa).

Residues 1–23 (MNLRKFLGGTVLVAFMLFSYSEQ) form the signal peptide.

Belongs to the PLAC1 family. In terms of tissue distribution, expressed in placenta.

The protein localises to the secreted. May play a role in placental development. The chain is Placenta-specific protein 1 from Mus musculus (Mouse).